Consider the following 341-residue polypeptide: NADH-quinone oxidoreductase subunit H 2 (341 aa).

The next 8 helical transmembrane spans lie at 13 to 33, 82 to 102, 115 to 135, 161 to 181, 190 to 210, 242 to 262, 277 to 297, and 317 to 337; these read IVVIGQSVLLIVVLLISIAYI, GVFLLAPLVTCVLALSAWAVI, VGVLYILAVSSLSVYGIIMAG, IGFVIICVLLCVGSLNLTAIV, VLGWYWLPLFPMFVVFYVSAL, LFVLGEYVAIVTMCAMGTILF, WVPGIVWFALKVLFMFFMFAM, and VFLPLSLAMVVIVAAVLQFAG.

This sequence belongs to the complex I subunit 1 family. NDH-1 is composed of 14 different subunits. Subunits NuoA, H, J, K, L, M, N constitute the membrane sector of the complex.

It is found in the cell inner membrane. The enzyme catalyses a quinone + NADH + 5 H(+)(in) = a quinol + NAD(+) + 4 H(+)(out). In terms of biological role, NDH-1 shuttles electrons from NADH, via FMN and iron-sulfur (Fe-S) centers, to quinones in the respiratory chain. The immediate electron acceptor for the enzyme in this species is believed to be ubiquinone. Couples the redox reaction to proton translocation (for every two electrons transferred, four hydrogen ions are translocated across the cytoplasmic membrane), and thus conserves the redox energy in a proton gradient. This subunit may bind ubiquinone. This chain is NADH-quinone oxidoreductase subunit H 2, found in Rhodopseudomonas palustris (strain HaA2).